A 910-amino-acid polypeptide reads, in one-letter code: Staphylococcal nuclease domain-containing protein 1 (910 aa).

Position 2 is an N-acetylalanine (Ala2). 3 consecutive TNase-like domains span residues 18-166 (TVQR…MWSE), 193-328 (KPVN…IWRD), and 341-496 (KQFV…LHSK). Thr103 carries the post-translational modification Phosphothreonine. Residue Lys193 is modified to N6-acetyllysine. Thr240 is subject to Phosphothreonine. 2 short sequence motifs (nuclear localization signal) span residues 321-325 (RRLRI) and 388-392 (KKLRP). A Phosphoserine modification is found at Ser426. Lys513 participates in a covalent cross-link: Glycyl lysine isopeptide (Lys-Gly) (interchain with G-Cter in SUMO2). A TNase-like 4 domain is found at 525–660 (GRSEAVVEYV…KQKKEKVWAH (136 aa)). Lys641 is subject to N6-acetyllysine. Ser645 carries the phosphoserine modification. A Tudor domain is found at 729-787 (APRRGEFCIAKFVDGEWYRARVEKVESPAKIHVFYIDYGNREVLPSTRLGTLSPAFSTR). Thr779 is subject to Phosphothreonine. Residues Ser781, Ser785, and Ser909 each carry the phosphoserine modification.

Forms a ternary complex with STAT6 and POLR2A. Associates with the RNA-induced silencing complex (RISC). Interacts with the RISC components AGO2, FMR1 and TNRC6A. Interacts with GTF2E1 and GTF2E2. Interacts with PIM1. Interacts with STAT5. Interacts with SYT11 (via C2 2 domain); the interaction with SYT11 is direct. As to quaternary structure, (Microbial infection) Interacts with EAV NSP1. Binds to acidic transactivation domain of EBNA2. Interacts with SARS-CoV-2 NSP9. Post-translationally, phosphorylated by PIM1 in vitro. As to expression, ubiquitously expressed.

Its subcellular location is the cytoplasm. The protein resides in the nucleus. The protein localises to the melanosome. It carries out the reaction Endonucleolytic cleavage to nucleoside 3'-phosphates and 3'-phosphooligonucleotide end-products.. Endonuclease that mediates miRNA decay of both protein-free and AGO2-loaded miRNAs. As part of its function in miRNA decay, regulates mRNAs involved in G1-to-S phase transition. Functions as a bridging factor between STAT6 and the basal transcription factor. Plays a role in PIM1 regulation of MYB activity. Functions as a transcriptional coactivator for STAT5. Its function is as follows. (Microbial infection) Functions as a transcriptional coactivator for the Epstein-Barr virus nuclear antigen 2 (EBNA2). In terms of biological role, (Microbial infection) Promotes SARS-CoV-2 RNA synthesis by binding to negative-sense RNA and the viral protein nsp9. The sequence is that of Staphylococcal nuclease domain-containing protein 1 (SND1) from Homo sapiens (Human).